Here is a 428-residue protein sequence, read N- to C-terminus: Trigger factor (428 aa).

The 85-residue stretch at 166–250 (GDIVTFDFKG…IKNIKEKILP (85 aa)) folds into the PPIase FKBP-type domain.

It belongs to the FKBP-type PPIase family. Tig subfamily.

It localises to the cytoplasm. It catalyses the reaction [protein]-peptidylproline (omega=180) = [protein]-peptidylproline (omega=0). Its function is as follows. Involved in protein export. Acts as a chaperone by maintaining the newly synthesized protein in an open conformation. Functions as a peptidyl-prolyl cis-trans isomerase. The protein is Trigger factor of Mycoplasma capricolum subsp. capricolum (strain California kid / ATCC 27343 / NCTC 10154).